A 354-amino-acid chain; its full sequence is Protein RecA (354 aa).

78–85 lines the ATP pocket; it reads GPESSGKT.

Belongs to the RecA family.

The protein resides in the cytoplasm. Functionally, can catalyze the hydrolysis of ATP in the presence of single-stranded DNA, the ATP-dependent uptake of single-stranded DNA by duplex DNA, and the ATP-dependent hybridization of homologous single-stranded DNAs. It interacts with LexA causing its activation and leading to its autocatalytic cleavage. This Zymomonas mobilis subsp. mobilis (strain ATCC 31821 / ZM4 / CP4) protein is Protein RecA.